A 1040-amino-acid polypeptide reads, in one-letter code: Multidrug resistance protein MdtB (1040 aa).

12 consecutive transmembrane segments (helical) span residues 16 to 36, 347 to 367, 369 to 389, 396 to 416, 440 to 460, 472 to 492, 537 to 557, 863 to 883, 888 to 908, 911 to 931, 968 to 988, and 998 to 1018; these read FIMR…AGII, LMMA…NIPA, IIPG…MVFL, LTLM…IVVI, IGFT…PLLF, FAIT…TLTP, WLTL…WVFI, LGST…VLGI, FIHP…ALLA, IAGS…IGIV, ILMT…STGV, and IGMV…TPVI.

This sequence belongs to the resistance-nodulation-cell division (RND) (TC 2.A.6) family. MdtB subfamily. In terms of assembly, part of a tripartite efflux system composed of MdtA, MdtB and MdtC. MdtB forms a heteromultimer with MdtC.

Its subcellular location is the cell inner membrane. In terms of biological role, the MdtABC tripartite complex confers resistance against novobiocin and deoxycholate. This Escherichia fergusonii (strain ATCC 35469 / DSM 13698 / CCUG 18766 / IAM 14443 / JCM 21226 / LMG 7866 / NBRC 102419 / NCTC 12128 / CDC 0568-73) protein is Multidrug resistance protein MdtB.